Reading from the N-terminus, the 207-residue chain is Large ribosomal subunit protein uL4 (207 aa).

The disordered stretch occupies residues 43-85 (SRRQGTHDTKGRSEVRGGGRKPWKQKGTGRARQGSIRSPQWVG). A compositionally biased stretch (basic and acidic residues) spans 47 to 59 (GTHDTKGRSEVRG). Positions 60–71 (GGRKPWKQKGTG) are enriched in basic residues.

The protein belongs to the universal ribosomal protein uL4 family. Part of the 50S ribosomal subunit.

One of the primary rRNA binding proteins, this protein initially binds near the 5'-end of the 23S rRNA. It is important during the early stages of 50S assembly. It makes multiple contacts with different domains of the 23S rRNA in the assembled 50S subunit and ribosome. In terms of biological role, forms part of the polypeptide exit tunnel. In Exiguobacterium sibiricum (strain DSM 17290 / CCUG 55495 / CIP 109462 / JCM 13490 / 255-15), this protein is Large ribosomal subunit protein uL4.